Here is a 788-residue protein sequence, read N- to C-terminus: MAEKLQNLELSSEELDRFTKAFQDPKFREMFVQYAEEIRDPENRRKYEQEISQMESERGMDIKFIHPKPGYVLLTSVNGVQKCYLNICSNDLLQKPECKPGKDGEGKAGLHWSLPYSLSAGREDLGKDGSKHVIYDVVFHPDTLHIASKNEKFKMIVDSTSLEAVASQFDVKLDKANVRTLSMKYKGVPNPSVLRKPLLGTTPKHGDPEDPLSFPYPYDVPTAVGKEKKDQKRVIKEEHKQHVTTSEQDPDIQIATTPNYTVRHRSYVDLQDFRDSRDSTPSPVPKELVITVDLPLLNSAESVNLHIAGKNLSLESEKPAYKLNVKLPYVVEDNQGKAQFNKARRQLIITVPVIQHNILTLMQDHFEEARGEKDLRGAESSVLHEEYTDNGSRTSACGTENKLEPLISCLNEEENNSEGLTSESNLDTGAPYLPEISPNQNTLDREEVVYGLTEDVPSMPSDTLVCPTFSCSQDPTSLTLIAHVRDIDENSISTDVGSNHYHIRCSVKQSTSSYDLLVTFLPHDIINPNEVYVNISENNALIGLTKSPESVGFWKMLYFGVSGQPLQERRFVSEDNINEVLACSIPLSQVSPSTQEHQPLIEVLEMTDERTHIRINKPKTECVVSAEHKEHCTDHSEHERDVGVERSNIAVGDTTEHYSNQVSPCRENTELDRDHTSERYEEPESTSCTGESTSDQQQKDSNLVFPGDSSAENKMACLKSSEQTTQESDLAEDDMPDRSDHTQNFDSRPASSSVLKEIGKKDGSVQVISDHTTQCPFQFQNSLLFDLD.

3 disordered regions span residues 194 to 249 (LRKP…SEQD), 415 to 438 (NNSE…EISP), and 628 to 754 (HKEH…SSSV). A compositionally biased stretch (basic and acidic residues) spans 225–241 (GKEKKDQKRVIKEEHKQ). The segment covering 417–427 (SEGLTSESNLD) has biased composition (polar residues). 2 stretches are compositionally biased toward basic and acidic residues: residues 628–644 (HKEH…DVGV) and 667–682 (ENTE…RYEE). 2 stretches are compositionally biased toward polar residues: residues 685-701 (STSC…QKDS) and 744-754 (NFDSRPASSSV).

This sequence belongs to the PIH1 family. Kintoun subfamily.

Its subcellular location is the cytoplasm. It is found in the dynein axonemal particle. Its function is as follows. Required for cytoplasmic pre-assembly of axonemal dyneins, thereby playing a central role in motility in cilia and flagella. Involved in pre-assembly of dynein arm complexes in the cytoplasm before intraflagellar transport loads them for the ciliary compartment. This Xenopus laevis (African clawed frog) protein is Protein kintoun.